We begin with the raw amino-acid sequence, 347 residues long: NADH-ubiquinone oxidoreductase chain 2 (347 aa).

The next 10 membrane-spanning stretches (helical) occupy residues 1 to 21 (MNPL…AIVA), 25 to 45 (HWLM…PILM), 59 to 79 (YFLT…MNLV), 111 to 131 (FHFW…LILL), 149 to 169 (INLD…GWGG), 178 to 198 (IMAY…AYNP), 201 to 221 (TLLN…MFML), 237 to 257 (MPLL…LPPL), 276 to 296 (VILP…YMRL), and 326 to 346 (LSPL…LALL).

It belongs to the complex I subunit 2 family. As to quaternary structure, core subunit of respiratory chain NADH dehydrogenase (Complex I) which is composed of 45 different subunits. Interacts with TMEM242.

The protein resides in the mitochondrion inner membrane. It carries out the reaction a ubiquinone + NADH + 5 H(+)(in) = a ubiquinol + NAD(+) + 4 H(+)(out). Its function is as follows. Core subunit of the mitochondrial membrane respiratory chain NADH dehydrogenase (Complex I) which catalyzes electron transfer from NADH through the respiratory chain, using ubiquinone as an electron acceptor. Essential for the catalytic activity and assembly of complex I. The protein is NADH-ubiquinone oxidoreductase chain 2 of Pteropus pumilus (Little golden-mantled flying fox).